The sequence spans 134 residues: Interferon-induced transmembrane protein 5 (134 aa).

Basic and acidic residues predominate over residues 1-20 (MDTSYPREDPRAPSSRKADA). The segment at 1–31 (MDTSYPREDPRAPSSRKADAAAHTALSMGTP) is disordered. Residues 1–39 (MDTSYPREDPRAPSSRKADAAAHTALSMGTPGPTPRDHM) lie on the Extracellular side of the membrane. Residues 40-60 (LWSVFSTMYLNLCCLGFLALV) traverse the membrane as a helical segment. 3 S-palmitoyl cysteine lipidation sites follow: cysteine 52, cysteine 53, and cysteine 86. Over 61 to 88 (HSVKARDQKMAGNLEAARQYGSKAKCYN) the chain is Cytoplasmic. The helical transmembrane segment at 89–109 (ILAAMWTLVPPLLLLGLVVTG) threads the bilayer. The Extracellular portion of the chain corresponds to 110–134 (ALHLSKLAKDSAAFFSTKFDEEDYN).

The protein belongs to the CD225/Dispanin family. Interacts with FKBP11. Post-translationally, palmitoylated. Detected in embryonic bone (at protein level). Highly expressed in osteoblasts of adults and embryos. Expressed in primitive hemopoietic cells.

It is found in the cell membrane. Its function is as follows. Required for normal bone mineralization. The protein is Interferon-induced transmembrane protein 5 (Ifitm5) of Mus musculus (Mouse).